Consider the following 567-residue polypeptide: Phosphoglucomutase-like protein 5 (567 aa).

Residues 1–26 (MEGSPIPVLTVPTAPYEDQRPTGGGG) form a disordered region. A Phosphothreonine modification is found at Thr120. Phosphoserine is present on Ser122.

It belongs to the phosphohexose mutase family. As to quaternary structure, interacts with DMD/dystrophin; the interaction is direct. Interacts with UTRN/utrophin.

Its subcellular location is the cell junction. The protein localises to the adherens junction. It localises to the cytoplasm. The protein resides in the cytoskeleton. It is found in the cell membrane. Its subcellular location is the sarcolemma. Component of adherens-type cell-cell and cell-matrix junctions. Has no phosphoglucomutase activity in vitro. The protein is Phosphoglucomutase-like protein 5 of Rattus norvegicus (Rat).